The primary structure comprises 452 residues: Imaginal disk growth factor 6 (452 aa).

The first 18 residues, 1–18, serve as a signal peptide directing secretion; it reads MIIKALAIVSLCLASIQA. The region spanning 29-452 is the GH18 domain; the sequence is KHLVCYYDSA…LRAIKYRLTN (424 aa). An intrachain disulfide couples C33 to C60. N233 is a glycosylation site (N-linked (GlcNAc...) asparagine). C352 and C435 are oxidised to a cystine.

Belongs to the glycosyl hydrolase 18 family. IDGF subfamily. Glycosylated. In terms of tissue distribution, in larvae, it is expressed in the fat body and by hemocytes.

It localises to the secreted. In terms of biological role, probably required to stimulate the proliferation, polarization and motility of imaginal disk cells. May act by stabilizing the binding of insulin-like peptides to its receptor through a simultaneous interaction with both molecules to form a multiprotein signaling complex. This Drosophila melanogaster (Fruit fly) protein is Imaginal disk growth factor 6.